A 670-amino-acid polypeptide reads, in one-letter code: Methionine--tRNA ligase (670 aa).

The 'HIGH' region motif lies at 14 to 24 (PYANGHLHLGH). The Zn(2+) site is built by C145, C148, C158, and C161. Residues 330–334 (KMSKS) carry the 'KMSKS' region motif. Position 333 (K333) interacts with ATP. Residues 570–670 (DFAKVDLRIA…AGAFPGMKVK (101 aa)) enclose the tRNA-binding domain.

It belongs to the class-I aminoacyl-tRNA synthetase family. MetG type 1 subfamily. Homodimer. It depends on Zn(2+) as a cofactor.

It localises to the cytoplasm. The catalysed reaction is tRNA(Met) + L-methionine + ATP = L-methionyl-tRNA(Met) + AMP + diphosphate. Is required not only for elongation of protein synthesis but also for the initiation of all mRNA translation through initiator tRNA(fMet) aminoacylation. In Legionella pneumophila (strain Corby), this protein is Methionine--tRNA ligase.